A 290-amino-acid polypeptide reads, in one-letter code: MSALIARQAPSAAERLADLAVQALVDEADLSPKPGLVDRRGSGAHSDLHLGLMHASAQSLWPAFAAMADAARSEGRVSQALRETLGQLGRDGEAEMLRVTAGVNTHRGAIWALGLLSAAAMLESGASAGGIAASAAALARLDDPAAPHNPDSHGARVCRRYGVLGAREQAQHGFPAVIEHGLPQLLASRRAGAGEQNARLDALLAIMSSLTDTCVLHRAGLEGLTRMQAGARAVLEAGGCASLAGRRRLRALEGEMLSLRASPGGAADLLAATLFLDRLTPAASAPIGSY.

The protein belongs to the CitG/MdcB family.

It catalyses the reaction 3'-dephospho-CoA + ATP = 2'-(5''-triphospho-alpha-D-ribosyl)-3'-dephospho-CoA + adenine. Its function is as follows. Involved in the formation of 2-(5''-phosphoribosyl)-3'-dephosphocoenzyme-A, the prosthetic group of the acyl-carrier protein of the malonate decarboxylase. The protein is Probable 2-(5''-triphosphoribosyl)-3'-dephosphocoenzyme-A synthase of Stutzerimonas stutzeri (strain A1501) (Pseudomonas stutzeri).